A 91-amino-acid chain; its full sequence is MATNKFLSILLLSLMAFAAILLPMISGQIITCLPGECTNPSECNAACKSNGYKGGACVSMSIGSTTGACCCKPNFKSQDSFKSNDIIINNN.

The signal sequence occupies residues 1-27 (MATNKFLSILLLSLMAFAAILLPMISG). 4 disulfides stabilise this stretch: C32–C71, C37–C57, C43–C69, and C47–C70.

It belongs to the DEFL family.

The protein resides in the secreted. In Arabidopsis thaliana (Mouse-ear cress), this protein is Putative defensin-like protein 83 (LCR46).